The chain runs to 102 residues: Large ribosomal subunit protein bL21 (102 aa).

This sequence belongs to the bacterial ribosomal protein bL21 family. Part of the 50S ribosomal subunit. Contacts protein L20.

In terms of biological role, this protein binds to 23S rRNA in the presence of protein L20. The polypeptide is Large ribosomal subunit protein bL21 (Leifsonia xyli subsp. xyli (strain CTCB07)).